A 251-amino-acid polypeptide reads, in one-letter code: 1-(5-phosphoribosyl)-5-[(5-phosphoribosylamino)methylideneamino] imidazole-4-carboxamide isomerase (251 aa).

Catalysis depends on aspartate 7, which acts as the Proton acceptor. The Proton donor role is filled by aspartate 131.

Belongs to the HisA/HisF family.

It localises to the cytoplasm. It carries out the reaction 1-(5-phospho-beta-D-ribosyl)-5-[(5-phospho-beta-D-ribosylamino)methylideneamino]imidazole-4-carboxamide = 5-[(5-phospho-1-deoxy-D-ribulos-1-ylimino)methylamino]-1-(5-phospho-beta-D-ribosyl)imidazole-4-carboxamide. Its pathway is amino-acid biosynthesis; L-histidine biosynthesis; L-histidine from 5-phospho-alpha-D-ribose 1-diphosphate: step 4/9. This chain is 1-(5-phosphoribosyl)-5-[(5-phosphoribosylamino)methylideneamino] imidazole-4-carboxamide isomerase, found in Blochmanniella floridana.